The sequence spans 487 residues: MTVQTAQIVKNYIGGEWVESISTKMEAVYNPATGEVIAQVPLSTKVDVEQAVLAANEAFKSWSKTAVPRRARILFKYQQLLVDNWEELAKLITIENGKSYNEAYGEVLRGIECVEFAAGAPTLMMGKQLPDIATGIESGMYRYPIGVIGGITPFNFPMMVPCWMFPLAIACGNTFVLKPSERTPLLAARLAELAEEAGLPKGVLNIVNGAHDVVNGLLEHKLVKAISFVGSQPVAEYVYKKGTENLKRVQALAGAKNHSIVLNDANLELATKQIISAAFGSAGERCMAASVVTVEEEIADQLVERLVAEANKIVIGNGLDEDVFLGPVIRDNHKERTIGYIDSGVEQGATLVRDGREDTAVKGAGYFVGPTIFDHVTKEMKIWQDEIFAPVLSIVRVKSLDEAIEIANESRFANGACIYTDSGASVRQFRETIESGMLGVNVGVPAPMAFFPFSGWKDSFYGDLHANGTDGVEFYTRKKMLTSRWEK.

The NAD(+) site is built by Phe154, Lys178, Glu181, Arg182, and Ser231. The active-site Nucleophile is Cys286. Glu386 provides a ligand contact to NAD(+).

This sequence belongs to the aldehyde dehydrogenase family. IolA subfamily. As to quaternary structure, homotetramer.

The enzyme catalyses 3-oxopropanoate + NAD(+) + CoA + H2O = hydrogencarbonate + acetyl-CoA + NADH + H(+). The catalysed reaction is 2-methyl-3-oxopropanoate + NAD(+) + CoA + H2O = propanoyl-CoA + hydrogencarbonate + NADH + H(+). It participates in polyol metabolism; myo-inositol degradation into acetyl-CoA; acetyl-CoA from myo-inositol: step 7/7. Its function is as follows. Catalyzes the oxidation of malonate semialdehyde (MSA) and methylmalonate semialdehyde (MMSA) into acetyl-CoA and propanoyl-CoA, respectively. Is involved in a myo-inositol catabolic pathway. Bicarbonate, and not CO2, is the end-product of the enzymatic reaction. This is Malonate-semialdehyde dehydrogenase 2 from Bacillus anthracis.